Reading from the N-terminus, the 20-residue chain is Mu-conotoxin SIIIB (20 aa).

At glutamine 1 the chain carries Pyrrolidone carboxylic acid. 3 cysteine pairs are disulfide-bonded: cysteine 3–cysteine 13, cysteine 4–cysteine 19, and cysteine 8–cysteine 20. A Cysteine amide modification is found at cysteine 20.

In terms of tissue distribution, expressed by the venom duct.

It is found in the secreted. In terms of biological role, mu-conotoxins block voltage-gated sodium channels (VGSC). Potently displaces (125)I-TIIIA from native rat brain Nav1.2/SCN2A (IC(50) is 5 nM) and muscle Nav1.4/SCN4A (IC(50) is 3 nM) VGSCs. Potently and irreversibly inhibits current through Xenopus oocyte-expressed Nav1.2/SCN2A and Nav1.4/SCN4A. In Conus striatus (Striated cone), this protein is Mu-conotoxin SIIIB.